The primary structure comprises 205 residues: GTP cyclohydrolase-2 (205 aa).

Position 49–53 (49–53 (RIHSE)) interacts with GTP. Residues Cys54, Cys65, and Cys67 each contribute to the Zn(2+) site. Residues Gln70, 92–94 (EGR), and Thr114 each bind GTP. The active-site Proton acceptor is Asp126. Arg128 acts as the Nucleophile in catalysis. The GTP site is built by Thr149 and Lys154.

Belongs to the GTP cyclohydrolase II family. It depends on Zn(2+) as a cofactor.

The enzyme catalyses GTP + 4 H2O = 2,5-diamino-6-hydroxy-4-(5-phosphoribosylamino)-pyrimidine + formate + 2 phosphate + 3 H(+). It participates in cofactor biosynthesis; riboflavin biosynthesis; 5-amino-6-(D-ribitylamino)uracil from GTP: step 1/4. Its function is as follows. Catalyzes the conversion of GTP to 2,5-diamino-6-ribosylamino-4(3H)-pyrimidinone 5'-phosphate (DARP), formate and pyrophosphate. The polypeptide is GTP cyclohydrolase-2 (Shewanella piezotolerans (strain WP3 / JCM 13877)).